A 150-amino-acid polypeptide reads, in one-letter code: Transcription antitermination protein NusB (150 aa).

The protein belongs to the NusB family.

Functionally, involved in transcription antitermination. Required for transcription of ribosomal RNA (rRNA) genes. Binds specifically to the boxA antiterminator sequence of the ribosomal RNA (rrn) operons. The chain is Transcription antitermination protein NusB from Saccharophagus degradans (strain 2-40 / ATCC 43961 / DSM 17024).